The following is a 605-amino-acid chain: Capsid scaffolding protein (605 aa).

Residues H48, S116, and H139 each act as charge relay system in the active site. Positions 235–274 are disordered; it reads ASDAPDLQKPDKALQSPPPASTDPATMLSGNAGEGATACG. The interaction with pAP stretch occupies residues 281–300; it reads QDLISVPRNTFMTLLQTNLD. Disordered stretches follow at residues 403 to 432 and 489 to 588; these read DYVP…PGED and PHQS…KSVS. The Nuclear localization signal signature appears at 410–416; it reads RSNKRKR. Over residues 568–579 the composition is skewed to polar residues; the sequence is ASASGVAQSKEP. The segment at 585-605 is interaction with major capsid protein; it reads KSVSAHLKSIFCEELLNKRVA.

It belongs to the herpesviridae capsid scaffolding protein family. In terms of assembly, homomultimer. Interacts with major capsid protein. Exists in a monomer-dimer equilibrium with the dimer being the active species. Capsid scaffolding protein is cleaved by assemblin after formation of the spherical procapsid. As a result, the capsid obtains its mature, icosahedral shape. Cleavages occur at two or more sites: release (R-site) and maturation (M-site).

Its subcellular location is the host cytoplasm. The protein localises to the host nucleus. It catalyses the reaction Cleaves -Ala-|-Ser- and -Ala-|-Ala- bonds in the scaffold protein.. In terms of biological role, acts as a scaffold protein by binding major capsid protein in the cytoplasm, inducing the nuclear localization of both proteins. Multimerizes in the nucleus such as major capsid protein forms the icosahedral T=16 capsid. Autocatalytic cleavage releases the assembly protein, and subsequently abolishes interaction with major capsid protein. Cleavages products are evicted from the capsid before or during DNA packaging. Functionally, protease that plays an essential role in virion assembly within the nucleus. Catalyzes the cleavage of the assembly protein after formation of the spherical procapsid. By that cleavage, the capsid matures and gains its icosahedral shape. The cleavage sites seem to include -Ala-Ser-, -Ala-Ala-, as well as Ala-Thr bonds. Assemblin and cleavages products are evicted from the capsid before or during DNA packaging. Plays a major role in capsid assembly. Acts as a scaffold protein by binding major capsid protein. Multimerizes in the nucleus such as major capsid protein forms the icosahedral T=16 capsid. Cleaved by assemblin after capsid completion. The cleavages products are evicted from the capsid before or during DNA packaging. The protein is Capsid scaffolding protein of Homo sapiens (Human).